A 345-amino-acid chain; its full sequence is Anthranilate phosphoribosyltransferase (345 aa).

Residues 77 to 79 (TAG), 82 to 83 (GD), T87, 89 to 92 (NVST), 106 to 114 (KHGNRAVSG), and S118 contribute to the 5-phospho-alpha-D-ribose 1-diphosphate site. Residue G79 participates in anthranilate binding. S91 contributes to the Mg(2+) binding site. Residue N109 coordinates anthranilate. Position 164 (R164) interacts with anthranilate. Residues D223 and E224 each contribute to the Mg(2+) site.

The protein belongs to the anthranilate phosphoribosyltransferase family. In terms of assembly, homodimer. It depends on Mg(2+) as a cofactor.

The catalysed reaction is N-(5-phospho-beta-D-ribosyl)anthranilate + diphosphate = 5-phospho-alpha-D-ribose 1-diphosphate + anthranilate. It participates in amino-acid biosynthesis; L-tryptophan biosynthesis; L-tryptophan from chorismate: step 2/5. Its function is as follows. Catalyzes the transfer of the phosphoribosyl group of 5-phosphorylribose-1-pyrophosphate (PRPP) to anthranilate to yield N-(5'-phosphoribosyl)-anthranilate (PRA). This Saccharolobus solfataricus (strain ATCC 35092 / DSM 1617 / JCM 11322 / P2) (Sulfolobus solfataricus) protein is Anthranilate phosphoribosyltransferase.